Reading from the N-terminus, the 408-residue chain is Serine/threonine transporter SstT (408 aa).

Transmembrane regions (helical) follow at residues 11 to 31, 43 to 63, 82 to 102, 141 to 161, 192 to 212, 216 to 236, 290 to 310, 316 to 336, and 363 to 383; these read LANG…VSLA, FLGS…VFIL, IVVL…VLSM, ALMT…GLAL, IGIF…AIAG, LLAV…PLIV, IPLG…VLTL, LGIQ…AISA, and VAMQ…AAET.

The protein belongs to the dicarboxylate/amino acid:cation symporter (DAACS) (TC 2.A.23) family.

Its subcellular location is the cell inner membrane. The enzyme catalyses L-serine(in) + Na(+)(in) = L-serine(out) + Na(+)(out). The catalysed reaction is L-threonine(in) + Na(+)(in) = L-threonine(out) + Na(+)(out). Functionally, involved in the import of serine and threonine into the cell, with the concomitant import of sodium (symport system). In Shewanella sp. (strain ANA-3), this protein is Serine/threonine transporter SstT.